The primary structure comprises 639 residues: Chaperone protein DnaK (639 aa).

Phosphothreonine; by autocatalysis is present on T198. Over residues 603–618 (AKAQTQGGAQEGAAKQ) the composition is skewed to low complexity. Residues 603 to 639 (AKAQTQGGAQEGAAKQSNATADDVVDAEFEEVKDDKK) form a disordered region. Residues 625–639 (DVVDAEFEEVKDDKK) show a composition bias toward acidic residues.

This sequence belongs to the heat shock protein 70 family.

In terms of biological role, acts as a chaperone. The polypeptide is Chaperone protein DnaK (Shewanella oneidensis (strain ATCC 700550 / JCM 31522 / CIP 106686 / LMG 19005 / NCIMB 14063 / MR-1)).